The primary structure comprises 37 residues: Large ribosomal subunit protein bL36c (37 aa).

The protein belongs to the bacterial ribosomal protein bL36 family.

The protein localises to the plastid. The protein resides in the organellar chromatophore. The protein is Large ribosomal subunit protein bL36c of Paulinella chromatophora.